Consider the following 1124-residue polypeptide: Tyrosine-protein kinase JAK3 (1124 aa).

Positions 1–223 (MAPPSEETPL…RRTVRRALRR (223 aa)) are interaction with cytokine/interferon/growth hormone receptors. Ser-17 is subject to Phosphoserine. The FERM domain maps to 24-356 (GALHVLLPAR…GYFRLTTDSQ (333 aa)). The region spanning 375–475 (QCHGPITLDF…GVAVTLTSCC (101 aa)) is the SH2; atypical domain. The Protein kinase 1 domain occupies 521 to 781 (LEWHENLGHG…AVIRDLNSLI (261 aa)). Phosphotyrosine; by autocatalysis is present on Tyr-785. The 290-residue stretch at 822-1111 (LKYISQLGKG…SRGCETHAFT (290 aa)) folds into the Protein kinase 2 domain. Residues 828-836 (LGKGNFGSV) and Lys-855 each bind ATP. 2 positions are modified to phosphotyrosine: Tyr-904 and Tyr-939. Asp-949 acts as the Proton acceptor in catalysis. A phosphotyrosine; by autocatalysis mark is found at Tyr-980 and Tyr-981.

Belongs to the protein kinase superfamily. Tyr protein kinase family. JAK subfamily. In terms of assembly, interacts with STAM2 and MYO18A. Interacts with SHB. Interacts with CD69. Tyrosine phosphorylated in response to IL-2 and IL-4. Dephosphorylation of Tyr-980 and Tyr-981 by PTPN2 negatively regulates cytokine-mediated signaling. As to expression, in NK cells and an NK-like cell line but not in resting T-cells or in other tissues. The S-form is more commonly seen in hematopoietic lines, whereas the B-form is detected in cells both of hematopoietic and epithelial origins.

The protein resides in the endomembrane system. The protein localises to the cytoplasm. It carries out the reaction L-tyrosyl-[protein] + ATP = O-phospho-L-tyrosyl-[protein] + ADP + H(+). Non-receptor tyrosine kinase involved in various processes such as cell growth, development, or differentiation. Mediates essential signaling events in both innate and adaptive immunity and plays a crucial role in hematopoiesis during T-cells development. In the cytoplasm, plays a pivotal role in signal transduction via its association with type I receptors sharing the common subunit gamma such as IL2R, IL4R, IL7R, IL9R, IL15R and IL21R. Following ligand binding to cell surface receptors, phosphorylates specific tyrosine residues on the cytoplasmic tails of the receptor, creating docking sites for STATs proteins. Subsequently, phosphorylates the STATs proteins once they are recruited to the receptor. Phosphorylated STATs then form homodimer or heterodimers and translocate to the nucleus to activate gene transcription. For example, upon IL2R activation by IL2, JAK1 and JAK3 molecules bind to IL2R beta (IL2RB) and gamma chain (IL2RG) subunits inducing the tyrosine phosphorylation of both receptor subunits on their cytoplasmic domain. Then, STAT5A and STAT5B are recruited, phosphorylated and activated by JAK1 and JAK3. Once activated, dimerized STAT5 translocates to the nucleus and promotes the transcription of specific target genes in a cytokine-specific fashion. In Homo sapiens (Human), this protein is Tyrosine-protein kinase JAK3.